Here is a 400-residue protein sequence, read N- to C-terminus: NADPH dehydrogenase 3 (400 aa).

Residues Thr38 and Gln115 each contribute to the FMN site. Substrate-binding residues include His192 and Asn195. Catalysis depends on Tyr197, which acts as the Proton donor. The FMN site is built by Arg244 and Arg349. Tyr376 serves as a coordination point for substrate.

In terms of assembly, homodimer or heterodimer with OYE2. FMN is required as a cofactor.

The catalysed reaction is A + NADPH + H(+) = AH2 + NADP(+). Its function is as follows. Flavin-dependent enoate reductase that catalyzes the chemo- and stereoslective hydrogenation of electron-poor alkenes. The enzyme is reduced by NADPH, and oxygen, quinones, and alpha,beta-unsaturated aldehydes and ketones can act as electron acceptors to complete catalytic turnover. The physiological oxidant remains elusive. Has a prooxidant activity, increasing reactive oxygen species (ROS) levels when overexpressed. Formation of OYE2-OYE3 heterodimers contribute to the induction of programmed cell death upon oxidative stress. The polypeptide is NADPH dehydrogenase 3 (Saccharomyces cerevisiae (strain ATCC 204508 / S288c) (Baker's yeast)).